The chain runs to 307 residues: N-acetylmuramic acid 6-phosphate etherase (307 aa).

An SIS domain is found at isoleucine 62–lysine 225. Glutamate 90 functions as the Proton donor in the catalytic mechanism. The active site involves glutamate 121.

Belongs to the GCKR-like family. MurNAc-6-P etherase subfamily. Homodimer.

It catalyses the reaction N-acetyl-D-muramate 6-phosphate + H2O = N-acetyl-D-glucosamine 6-phosphate + (R)-lactate. Its pathway is amino-sugar metabolism; 1,6-anhydro-N-acetylmuramate degradation. It functions in the pathway amino-sugar metabolism; N-acetylmuramate degradation. The protein operates within cell wall biogenesis; peptidoglycan recycling. Functionally, specifically catalyzes the cleavage of the D-lactyl ether substituent of MurNAc 6-phosphate, producing GlcNAc 6-phosphate and D-lactate. Together with AnmK, is also required for the utilization of anhydro-N-acetylmuramic acid (anhMurNAc) either imported from the medium or derived from its own cell wall murein, and thus plays a role in cell wall recycling. The chain is N-acetylmuramic acid 6-phosphate etherase from Mesorhizobium japonicum (strain LMG 29417 / CECT 9101 / MAFF 303099) (Mesorhizobium loti (strain MAFF 303099)).